The chain runs to 263 residues: Calpain small subunit 1 (263 aa).

At Met1 the chain carries N-acetylmethionine. Ser6 carries the post-translational modification Phosphoserine. In terms of domain architecture, EF-hand 1; atypical spans 91-125; sequence EEVRQFRRLFAQLAGDDMEVSATELMNILNKVVTR. Positions 104, 107, 109, 114, 132, 147, 149, 151, 153, and 158 each coordinate Ca(2+). EF-hand domains lie at 134–167, 164–199, 200–228, and 229–263; these read FGIDTCRSMVAVMDSDTTGKLGFEEFKYLWNNIK, NNIKKWQAVYKQFDVDRSGTIGSSELPGAFEAAGFR, LNEHLYNMIIRRYSDEGGNMDFDNFISCL, and VRLDAMFRAFKSLDKDGTGQIQVNIQEWLQLTMYS. An N6-acetyllysine modification is found at Lys174. Ca(2+) contacts are provided by Asp177, Asp179, Ser181, Thr183, Glu188, and Asp220.

Homodimer or heterodimer of a large (catalytic) and a small (regulatory) subunit. In presence of calcium, the heterodimer dissociates.

It is found in the cytoplasm. The protein resides in the cell membrane. Regulatory subunit of the calcium-regulated non-lysosomal thiol-protease which catalyzes limited proteolysis of substrates involved in cytoskeletal remodeling and signal transduction. Essential for embryonic development. The chain is Calpain small subunit 1 (CAPNS1) from Bos taurus (Bovine).